A 102-amino-acid polypeptide reads, in one-letter code: Large ribosomal subunit protein bL21 (102 aa).

It belongs to the bacterial ribosomal protein bL21 family. In terms of assembly, part of the 50S ribosomal subunit. Contacts protein L20.

Functionally, this protein binds to 23S rRNA in the presence of protein L20. The protein is Large ribosomal subunit protein bL21 of Exiguobacterium sibiricum (strain DSM 17290 / CCUG 55495 / CIP 109462 / JCM 13490 / 255-15).